A 94-amino-acid polypeptide reads, in one-letter code: DNA-directed RNA polymerase subunit omega (94 aa).

Belongs to the RNA polymerase subunit omega family. In terms of assembly, the RNAP catalytic core consists of 2 alpha, 1 beta, 1 beta' and 1 omega subunit. When a sigma factor is associated with the core the holoenzyme is formed, which can initiate transcription.

It catalyses the reaction RNA(n) + a ribonucleoside 5'-triphosphate = RNA(n+1) + diphosphate. Promotes RNA polymerase assembly. Latches the N- and C-terminal regions of the beta' subunit thereby facilitating its interaction with the beta and alpha subunits. This Limosilactobacillus fermentum (strain NBRC 3956 / LMG 18251) (Lactobacillus fermentum) protein is DNA-directed RNA polymerase subunit omega.